The following is a 371-amino-acid chain: Putative glutamate--cysteine ligase 2 (371 aa).

It belongs to the glutamate--cysteine ligase type 2 family. YbdK subfamily.

It carries out the reaction L-cysteine + L-glutamate + ATP = gamma-L-glutamyl-L-cysteine + ADP + phosphate + H(+). ATP-dependent carboxylate-amine ligase which exhibits weak glutamate--cysteine ligase activity. This chain is Putative glutamate--cysteine ligase 2, found in Burkholderia thailandensis (strain ATCC 700388 / DSM 13276 / CCUG 48851 / CIP 106301 / E264).